The following is a 184-amino-acid chain: Fruit protein pKIWI501 (184 aa).

Residues 1–184 are disordered; sequence MATVEVTPAV…TEVPVDKTEE (184 aa). 2 stretches are compositionally biased toward low complexity: residues 25 to 36 and 53 to 65; these read PQEPQPEAAVAA and PEAV…PAAT. Over residues 72–92 the composition is skewed to acidic residues; it reads EVAEAEEEVVEEPQEVPEEPV. The segment covering 96–119 has biased composition (basic and acidic residues); sequence AAKEVEATEGKAEPTGEMKDKTPE. Over residues 120–156 the composition is skewed to low complexity; it reads ATDAPEAPAAAEEPTDAPEAPAVAEEPTNAPEAPAVG. Over residues 159–168 the composition is skewed to basic and acidic residues; sequence PEAKEGKPDE.

To H.brasiliensis latex allergen Hev b 5.

This Actinidia deliciosa (Kiwi) protein is Fruit protein pKIWI501.